We begin with the raw amino-acid sequence, 237 residues long: Ribosomal RNA small subunit methyltransferase G (237 aa).

S-adenosyl-L-methionine is bound by residues Gly-78, Phe-83, 129–130 (AE), and Arg-148. The segment at 218-237 (KKETPNKYPRKAGMPNKRPL) is disordered.

The protein belongs to the methyltransferase superfamily. RNA methyltransferase RsmG family.

It localises to the cytoplasm. In terms of biological role, specifically methylates the N7 position of a guanine in 16S rRNA. The polypeptide is Ribosomal RNA small subunit methyltransferase G (Streptococcus gordonii (strain Challis / ATCC 35105 / BCRC 15272 / CH1 / DL1 / V288)).